A 98-amino-acid chain; its full sequence is NADH-ubiquinone oxidoreductase chain 4L (98 aa).

The next 3 helical transmembrane spans lie at 1–21, 29–49, and 61–81; these read MSLT…GLLL, SLLC…MVIL, and IILL…LVMV.

This sequence belongs to the complex I subunit 4L family. In terms of assembly, core subunit of respiratory chain NADH dehydrogenase (Complex I) which is composed of 45 different subunits.

It is found in the mitochondrion inner membrane. The catalysed reaction is a ubiquinone + NADH + 5 H(+)(in) = a ubiquinol + NAD(+) + 4 H(+)(out). Functionally, core subunit of the mitochondrial membrane respiratory chain NADH dehydrogenase (Complex I) which catalyzes electron transfer from NADH through the respiratory chain, using ubiquinone as an electron acceptor. Part of the enzyme membrane arm which is embedded in the lipid bilayer and involved in proton translocation. The protein is NADH-ubiquinone oxidoreductase chain 4L (MT-ND4L) of Platyrrhinus helleri (Heller's broad-nosed bat).